A 202-amino-acid chain; its full sequence is Orotate phosphoribosyltransferase (202 aa).

Residues Lys93 and 113-121 contribute to the 5-phospho-alpha-D-ribose 1-diphosphate site; that span reads EDIITTGGS. Residues Thr117 and Arg145 each contribute to the orotate site.

It belongs to the purine/pyrimidine phosphoribosyltransferase family. PyrE subfamily. In terms of assembly, homodimer. Requires Mg(2+) as cofactor.

The catalysed reaction is orotidine 5'-phosphate + diphosphate = orotate + 5-phospho-alpha-D-ribose 1-diphosphate. The protein operates within pyrimidine metabolism; UMP biosynthesis via de novo pathway; UMP from orotate: step 1/2. Functionally, catalyzes the transfer of a ribosyl phosphate group from 5-phosphoribose 1-diphosphate to orotate, leading to the formation of orotidine monophosphate (OMP). The protein is Orotate phosphoribosyltransferase of Campylobacter curvus (strain 525.92).